The primary structure comprises 453 residues: Bifunctional protein GlmU (453 aa).

The interval 1–225 is pyrophosphorylase; sequence MHAHVILAAG…AEEALGVNTR (225 aa). Residues 7 to 10, K21, Q72, and 77 to 78 each bind UDP-N-acetyl-alpha-D-glucosamine; these read LAAG and GT. D102 is a binding site for Mg(2+). Residues G138, E152, N167, and N223 each coordinate UDP-N-acetyl-alpha-D-glucosamine. N223 provides a ligand contact to Mg(2+). Residues 226–246 form a linker region; sequence EELARVEGVLLRRLRAEWMGK. An N-acetyltransferase region spans residues 247–453; the sequence is GVRMILPETI…GYALRKLGEG (207 aa). Residues R329 and K347 each coordinate UDP-N-acetyl-alpha-D-glucosamine. The active-site Proton acceptor is the H359. Positions 362 and 373 each coordinate UDP-N-acetyl-alpha-D-glucosamine. Acetyl-CoA contacts are provided by residues A376, 382–383, S401, A419, and R436; that span reads NY.

It in the N-terminal section; belongs to the N-acetylglucosamine-1-phosphate uridyltransferase family. This sequence in the C-terminal section; belongs to the transferase hexapeptide repeat family. In terms of assembly, homotrimer. It depends on Mg(2+) as a cofactor.

It localises to the cytoplasm. The catalysed reaction is alpha-D-glucosamine 1-phosphate + acetyl-CoA = N-acetyl-alpha-D-glucosamine 1-phosphate + CoA + H(+). The enzyme catalyses N-acetyl-alpha-D-glucosamine 1-phosphate + UTP + H(+) = UDP-N-acetyl-alpha-D-glucosamine + diphosphate. It participates in nucleotide-sugar biosynthesis; UDP-N-acetyl-alpha-D-glucosamine biosynthesis; N-acetyl-alpha-D-glucosamine 1-phosphate from alpha-D-glucosamine 6-phosphate (route II): step 2/2. It functions in the pathway nucleotide-sugar biosynthesis; UDP-N-acetyl-alpha-D-glucosamine biosynthesis; UDP-N-acetyl-alpha-D-glucosamine from N-acetyl-alpha-D-glucosamine 1-phosphate: step 1/1. The protein operates within bacterial outer membrane biogenesis; LPS lipid A biosynthesis. Catalyzes the last two sequential reactions in the de novo biosynthetic pathway for UDP-N-acetylglucosamine (UDP-GlcNAc). The C-terminal domain catalyzes the transfer of acetyl group from acetyl coenzyme A to glucosamine-1-phosphate (GlcN-1-P) to produce N-acetylglucosamine-1-phosphate (GlcNAc-1-P), which is converted into UDP-GlcNAc by the transfer of uridine 5-monophosphate (from uridine 5-triphosphate), a reaction catalyzed by the N-terminal domain. This is Bifunctional protein GlmU from Thermus thermophilus (strain ATCC BAA-163 / DSM 7039 / HB27).